The chain runs to 1534 residues: Ribosome-binding protein 1 (1534 aa).

Residues 1–7 (MDIYDTQ) lie on the Lumenal side of the membrane. The helical transmembrane segment at 8–28 (TLGVMVFGGFMVVSAIGIFLV) threads the bilayer. The Cytoplasmic portion of the chain corresponds to 29-1534 (STFSMKETSY…DSSSKEGTSV (1506 aa)). 2 disordered regions span residues 45 to 91 (QRKE…PAPN) and 125 to 152 (PAMPQEKLAPSPKDKKKKEKKVAKVEPA). Basic residues predominate over residues 52–63 (THHQKVEKKKKE). Residues 64–88 (KTVEKKGKTKKKEEKPNGKIPDHEP) are compositionally biased toward basic and acidic residues. Residues 125–135 (PAMPQEKLAPS) are compositionally biased toward low complexity. A Glycyl lysine isopeptide (Lys-Gly) (interchain with G-Cter in SUMO2) cross-link involves residue lysine 148. Residues serine 159 and serine 165 each carry the phosphoserine modification. Disordered stretches follow at residues 173-780 (APKE…PLYL), 968-987 (KELVEKSEAARQEEQQRKAL), and 1021-1082 (RELC…RAEN). The segment covering 175 to 194 (KEVPMVVVPPVGAKAGTPAT) has biased composition (low complexity). 54 tandem repeats follow at residues 197 to 206 (AQGKKAEGAQ), 207 to 216 (NQSRKAEGAP), 217 to 226 (NQGKKAEGAL), 227 to 236 (NQGKKAEGAQ), 237 to 246 (NQGKKVEVAP), 247 to 256 (NQGKKAEGGQ), 257 to 266 (NQGKKVEGAQ), 267 to 276 (NQGKKAEGTP), 277 to 286 (NQGKKAEGAP), 287 to 296 (NQGKKTDGAP), 297 to 306 (NQGKKSEGAP), 307 to 316 (NQGKKAEGAQ), 317 to 326 (NQGKKVEVAP), 327 to 336 (NQGKKAEGGQ), 337 to 346 (NQGKKVEGAQ), 347 to 356 (NQGKKAEGTP), 357 to 366 (NQGKKAEGAP), 367 to 376 (NQGKKTDGAP), 377 to 386 (NQGKKSEGAP), 387 to 396 (NQGKKVEGAQ), 397 to 406 (NQGKKVEGVQ), 407 to 416 (NQGKKAEGAQ), 417 to 426 (NQGKKAEGTS), 427 to 436 (SQGRKEEGTP), 437 to 446 (NLGKKAEGSP), 447 to 456 (NQGKKVEVVQ), 457 to 466 (NQSKKVEGAP), 467 to 476 (NQGKKAEGSQ), 477 to 486 (NQGKKTEGAS), 487 to 496 (NQGKKVDGAQ), 497 to 506 (NQGKKAEGAP), 507 to 516 (NQGKKVEGAQ), 517 to 526 (NQGKKAEGTP), 527 to 536 (NQGKKAEGAQ), 537 to 546 (NQGKKAEGAP), 547 to 556 (NQGKKAEGAP), 557 to 566 (NQGKKAEGAP), 567 to 576 (NQGKKAEGAP), 577 to 586 (NQGKKAEAAP), 587 to 596 (NQGKKAEGAP), 597 to 606 (NQGKKAEGAP), 607 to 616 (NQGKKAEAAP), 617 to 626 (NQGKKAEGAP), 627 to 636 (NQGKKAEGAP), 637 to 646 (NQGKKAEGAP), 647 to 656 (NQGKKAEGAQ), 657 to 666 (NQGKKAEGAP), 667 to 676 (NQGKKADLVA), 677 to 686 (NQGTKAEGVA), 687 to 696 (GQGKKAEGAP), 697 to 706 (NQGKKGEGTP), 707 to 716 (NQGKKSEGSP), 717 to 726 (NQGKKVDASA), and 727 to 736 (NQSKRAESAP). Positions 197–736 (AQGKKAEGAQ…NQSKRAESAP (540 aa)) are 54 X 10 AA tandem repeats of [NASG]-[QL]-[GS]-[KRT]-[KR]-[AVTSEG]-[ED]-[AGVLS]-[ATGSV]-[PQLSA]. Position 275 is a phosphothreonine (threonine 275). Over residues 395-428 (AQNQGKKVEGVQNQGKKAEGAQNQGKKAEGTSSQ) the composition is skewed to polar residues. Over residues 474-499 (GSQNQGKKTEGASNQGKKVDGAQNQG) the composition is skewed to polar residues. Residues 705–718 (TPNQGKKSEGSPNQ) are compositionally biased toward polar residues. Position 715 is a phosphoserine (serine 715). A Phosphoserine modification is found at serine 747. A Glycyl lysine isopeptide (Lys-Gly) (interchain with G-Cter in SUMO1) cross-link involves residue lysine 752. Residue serine 1032 is modified to Phosphoserine. Residues 1059–1080 (AEVKSKSEELSGLHGQLKEARA) are compositionally biased toward basic and acidic residues. At lysine 1064 the chain carries N6-acetyllysine. Residues serine 1091 and serine 1110 each carry the phosphoserine modification. 3 disordered regions span residues 1224-1251 (ELLKQRPADTDPSSDLASKLREAEETQN), 1391-1416 (KSHVEDGDVAGSPAAPPAEQDPVELK), and 1509-1534 (ERDTVKKLQEQLDKTDDSSSKEGTSV). Over residues 1509 to 1528 (ERDTVKKLQEQLDKTDDSSS) the composition is skewed to basic and acidic residues.

It is found in the endoplasmic reticulum membrane. Its function is as follows. Acts as a ribosome receptor and mediates interaction between the ribosome and the endoplasmic reticulum membrane. This chain is Ribosome-binding protein 1 (RRBP1), found in Canis lupus familiaris (Dog).